Reading from the N-terminus, the 846-residue chain is DNA mismatch repair protein MutS (846 aa).

610-617 (GPNMGGKS) serves as a coordination point for ATP.

The protein belongs to the DNA mismatch repair MutS family.

This protein is involved in the repair of mismatches in DNA. It is possible that it carries out the mismatch recognition step. This protein has a weak ATPase activity. This is DNA mismatch repair protein MutS from Legionella pneumophila (strain Lens).